Consider the following 201-residue polypeptide: Small ribosomal subunit protein uS4c (201 aa).

The S4 RNA-binding domain maps to 89-152 (MRLDNILFRL…NSRTLVQNLL (64 aa)).

The protein belongs to the universal ribosomal protein uS4 family. As to quaternary structure, part of the 30S ribosomal subunit. Contacts protein S5. The interaction surface between S4 and S5 is involved in control of translational fidelity.

The protein resides in the plastid. The protein localises to the chloroplast. Functionally, one of the primary rRNA binding proteins, it binds directly to 16S rRNA where it nucleates assembly of the body of the 30S subunit. In terms of biological role, with S5 and S12 plays an important role in translational accuracy. This chain is Small ribosomal subunit protein uS4c (rps4), found in Olimarabidopsis pumila (Dwarf rocket).